A 51-amino-acid polypeptide reads, in one-letter code: Protein YrhD (51 aa).

The protein is Protein YrhD (yrhD) of Escherichia coli (strain K12).